The following is a 122-amino-acid chain: Large ribosomal subunit protein uL14c (122 aa).

It belongs to the universal ribosomal protein uL14 family. As to quaternary structure, part of the 50S ribosomal subunit.

The protein resides in the plastid. It is found in the chloroplast. Binds to 23S rRNA. The protein is Large ribosomal subunit protein uL14c of Pinus koraiensis (Korean pine).